Consider the following 253-residue polypeptide: Small ribosomal subunit protein uS2 (253 aa).

An N-acetylserine modification is found at Ser-2. The tract at residues 212–253 (QQAAEEAAAGEEDDEAKEEVAAEEQTEAADWAEGQSEEVASW) is disordered. Residues 219–238 (AAGEEDDEAKEEVAAEEQTE) show a composition bias toward acidic residues.

Belongs to the universal ribosomal protein uS2 family. Component of the small ribosomal subunit. Mature ribosomes consist of a small (40S) and a large (60S) subunit. The 40S subunit contains about 33 different proteins and 1 molecule of RNA (18S). The 60S subunit contains about 49 different proteins and 3 molecules of RNA (25S, 5.8S and 5S). Interacts with RPS21.

The protein resides in the cytoplasm. In terms of biological role, required for the assembly and/or stability of the 40S ribosomal subunit. Required for the processing of the 20S rRNA-precursor to mature 18S rRNA in a late step of the maturation of 40S ribosomal subunits. The chain is Small ribosomal subunit protein uS2 from Eremothecium gossypii (strain ATCC 10895 / CBS 109.51 / FGSC 9923 / NRRL Y-1056) (Yeast).